The following is a 146-amino-acid chain: Probable acetyltransferase HI_0677 (146 aa).

Positions 1–146 (MKLFKAEQWN…ERLFELSLSC (146 aa)) constitute an N-acetyltransferase domain.

The polypeptide is Probable acetyltransferase HI_0677 (Haemophilus influenzae (strain ATCC 51907 / DSM 11121 / KW20 / Rd)).